The chain runs to 452 residues: Bifunctional protein GlmU (452 aa).

Positions 1–218 (MKVLILAAGL…IVEVSGVNDR (218 aa)) are pyrophosphorylase. UDP-N-acetyl-alpha-D-glucosamine is bound by residues 6 to 9 (LAAG), Lys20, Gln68, 73 to 74 (GT), 95 to 97 (YGD), Gly134, Glu147, Asn162, and Asn216. Asp97 is a binding site for Mg(2+). Residue Asn216 coordinates Mg(2+). The tract at residues 219 to 239 (IQLAQLETIAKQRILEKLMLS) is linker. The N-acetyltransferase stretch occupies residues 240–452 (GVTIVDPNST…EELKNADHKE (213 aa)). UDP-N-acetyl-alpha-D-glucosamine is bound by residues Arg321 and Lys339. The Proton acceptor role is filled by His351. The UDP-N-acetyl-alpha-D-glucosamine site is built by Tyr354 and Asn365. Acetyl-CoA-binding positions include Ala368, 374-375 (NY), Ser393, Ala411, and Arg428.

In the N-terminal section; belongs to the N-acetylglucosamine-1-phosphate uridyltransferase family. It in the C-terminal section; belongs to the transferase hexapeptide repeat family. Homotrimer. The cofactor is Mg(2+).

Its subcellular location is the cytoplasm. It carries out the reaction alpha-D-glucosamine 1-phosphate + acetyl-CoA = N-acetyl-alpha-D-glucosamine 1-phosphate + CoA + H(+). The enzyme catalyses N-acetyl-alpha-D-glucosamine 1-phosphate + UTP + H(+) = UDP-N-acetyl-alpha-D-glucosamine + diphosphate. The protein operates within nucleotide-sugar biosynthesis; UDP-N-acetyl-alpha-D-glucosamine biosynthesis; N-acetyl-alpha-D-glucosamine 1-phosphate from alpha-D-glucosamine 6-phosphate (route II): step 2/2. It participates in nucleotide-sugar biosynthesis; UDP-N-acetyl-alpha-D-glucosamine biosynthesis; UDP-N-acetyl-alpha-D-glucosamine from N-acetyl-alpha-D-glucosamine 1-phosphate: step 1/1. Its pathway is bacterial outer membrane biogenesis; LPS lipid A biosynthesis. Functionally, catalyzes the last two sequential reactions in the de novo biosynthetic pathway for UDP-N-acetylglucosamine (UDP-GlcNAc). The C-terminal domain catalyzes the transfer of acetyl group from acetyl coenzyme A to glucosamine-1-phosphate (GlcN-1-P) to produce N-acetylglucosamine-1-phosphate (GlcNAc-1-P), which is converted into UDP-GlcNAc by the transfer of uridine 5-monophosphate (from uridine 5-triphosphate), a reaction catalyzed by the N-terminal domain. The polypeptide is Bifunctional protein GlmU (Fervidobacterium nodosum (strain ATCC 35602 / DSM 5306 / Rt17-B1)).